The sequence spans 114 residues: MGPGLLCWVLLCLLGAGPVDAGVTQSPTHLIKTRGQQVTLRCSPISGHKSVSWYQQVLGQGPQFIFQYYEKEERGRGNFPDRFSARQFPNYSSELNVNALLLGDSALYLCASSL.

Positions 1 to 21 are cleaved as a signal peptide; the sequence is MGPGLLCWVLLCLLGAGPVDA. The Ig-like domain occupies 22–114; the sequence is GVTQSPTHLI…SALYLCASSL (93 aa). Cysteine 42 and cysteine 110 form a disulfide bridge. Residue asparagine 90 is glycosylated (N-linked (GlcNAc...) asparagine).

As to quaternary structure, alpha-beta TR is a heterodimer composed of an alpha and beta chain; disulfide-linked. The alpha-beta TR is associated with the transmembrane signaling CD3 coreceptor proteins to form the TR-CD3 (TcR or TCR). The assembly of alpha-beta TR heterodimers with CD3 occurs in the endoplasmic reticulum where a single alpha-beta TR heterodimer associates with one CD3D-CD3E heterodimer, one CD3G-CD3E heterodimer and one CD247 homodimer forming a stable octameric structure. CD3D-CD3E and CD3G-CD3E heterodimers preferentially associate with TR alpha and TR beta chains, respectively. The association of the CD247 homodimer is the last step of TcR assembly in the endoplasmic reticulum and is required for transport to the cell surface.

The protein resides in the cell membrane. In terms of biological role, v region of the variable domain of T cell receptor (TR) beta chain that participates in the antigen recognition. Alpha-beta T cell receptors are antigen specific receptors which are essential to the immune response and are present on the cell surface of T lymphocytes. Recognize peptide-major histocompatibility (MH) (pMH) complexes that are displayed by antigen presenting cells (APC), a prerequisite for efficient T cell adaptive immunity against pathogens. Binding of alpha-beta TR to pMH complex initiates TR-CD3 clustering on the cell surface and intracellular activation of LCK that phosphorylates the ITAM motifs of CD3G, CD3D, CD3E and CD247 enabling the recruitment of ZAP70. In turn ZAP70 phosphorylates LAT, which recruits numerous signaling molecules to form the LAT signalosome. The LAT signalosome propagates signal branching to three major signaling pathways, the calcium, the mitogen-activated protein kinase (MAPK) kinase and the nuclear factor NF-kappa-B (NF-kB) pathways, leading to the mobilization of transcription factors that are critical for gene expression and essential for T cell growth and differentiation. The T cell repertoire is generated in the thymus, by V-(D)-J rearrangement. This repertoire is then shaped by intrathymic selection events to generate a peripheral T cell pool of self-MH restricted, non-autoaggressive T cells. Post-thymic interaction of alpha-beta TR with the pMH complexes shapes TR structural and functional avidity. The sequence is that of T cell receptor beta variable 5-5 from Homo sapiens (Human).